The primary structure comprises 408 residues: FAD-dependent monooxygenase nscC (408 aa).

The signal sequence occupies residues 1–20; that stretch reads MASRLPILIIGAGISGLTTA. FAD contacts are provided by E34 and A45. Residues N91 and N103 are each glycosylated (N-linked (GlcNAc...) asparagine). R119 is a binding site for FAD. N170 and N231 each carry an N-linked (GlcNAc...) asparagine glycan. Positions 328 and 341 each coordinate FAD.

This sequence belongs to the paxM FAD-dependent monooxygenase family. FAD is required as a cofactor.

It participates in secondary metabolite biosynthesis. FAD-dependent monooxygenase; part of the gene cluster that mediates the biosynthesis of neosartoricin, a prenylated anthracenone that exhibits T-cell antiproliferative activity, suggestive of a physiological role as an immunosuppressive agent. The non-reducing polyketide synthase nscA probably synthesizes and cyclizes the decaketide backbone. The hydrolase nscB then mediates the product release through hydrolysis followed by spontaneous decarboxylation. The prenyltransferase nscD catalyzes the addition of the dimethylallyl group to the aromatic C5. The FAD-dependent monooxygenase nscC is then responsible for the stereospecific hydroxylation at C2. There is no gene encoding O-acetyltransferase in the nsc gene cluster; thus, the last step of 2-O-acetylation leading to neosartoricin may be catalyzed by an unidentified O-acetyltransferase. The sequence is that of FAD-dependent monooxygenase nscC from Aspergillus fumigatus (strain ATCC MYA-4609 / CBS 101355 / FGSC A1100 / Af293) (Neosartorya fumigata).